The sequence spans 432 residues: Amino-acid acetyltransferase (432 aa).

Residues 286–425 form the N-acetyltransferase domain; sequence ELVREAAIED…ASLYNFQRNS (140 aa).

It belongs to the acetyltransferase family. ArgA subfamily.

Its subcellular location is the cytoplasm. It catalyses the reaction L-glutamate + acetyl-CoA = N-acetyl-L-glutamate + CoA + H(+). It participates in amino-acid biosynthesis; L-arginine biosynthesis; N(2)-acetyl-L-ornithine from L-glutamate: step 1/4. This Pseudomonas syringae pv. tomato (strain ATCC BAA-871 / DC3000) protein is Amino-acid acetyltransferase.